The chain runs to 872 residues: G-type lectin S-receptor-like serine/threonine-protein kinase At5g35370 (872 aa).

A signal peptide spans 1 to 26; that stretch reads MKSTFLLLLLLLSLNLLFVFVSCASS. Residues 27–443 lie on the Extracellular side of the membrane; sequence IEFVYPNFTA…NNNRGGSSFP (417 aa). N-linked (GlcNAc...) asparagine glycans are attached at residues Asn-33, Asn-148, and Asn-239. The region spanning 35–156 is the Bulb-type lectin domain; sequence TASNLRFVDS…LNVSLWESFD (122 aa). Residues 283 to 322 form the EGF-like; atypical domain; it reads PMDSCQIPFVCGKLGLCNLDNASENQSCSCPDEMRMDAGK. Disulfide bonds link Cys-287–Cys-299 and Cys-293–Cys-310. N-linked (GlcNAc...) asparagine glycosylation is found at Asn-303, Asn-307, Asn-342, Asn-379, and Asn-389. A PAN domain is found at 338–423; it reads CEARNISYLE…HDLIGYVKLS (86 aa). Disulfide bonds link Cys-372–Cys-394 and Cys-376–Cys-382. A helical transmembrane segment spans residues 444–464; sequence VIALVLLPCSGFFLLIALGLL. The Cytoplasmic segment spans residues 465–872; the sequence is WWRRCAVMRY…IASQEVSGPR (408 aa). The Protein kinase domain maps to 515-814; sequence ENFKMQIGSG…GSIPLGNPRM (300 aa). Residues 521-529 and Lys-543 contribute to the ATP site; that span reads IGSGGFGSV. Positions 603-620 are caM-binding; that stretch reads GNGPVLEWQERFDIALGT. Catalysis depends on Asp-639, which acts as the Proton acceptor. Residue Ser-656 is modified to Phosphoserine. A Phosphothreonine modification is found at Thr-673. Phosphoserine is present on residues Ser-716 and Ser-859. Residues 836–872 are disordered; that stretch reads QNGESETMVFHRRESSNSGGSRQSASYIASQEVSGPR. Low complexity predominate over residues 851–861; that stretch reads SNSGGSRQSAS. Over residues 862–872 the composition is skewed to polar residues; that stretch reads YIASQEVSGPR.

Belongs to the protein kinase superfamily. Ser/Thr protein kinase family.

It localises to the cell membrane. The catalysed reaction is L-seryl-[protein] + ATP = O-phospho-L-seryl-[protein] + ADP + H(+). It catalyses the reaction L-threonyl-[protein] + ATP = O-phospho-L-threonyl-[protein] + ADP + H(+). The chain is G-type lectin S-receptor-like serine/threonine-protein kinase At5g35370 from Arabidopsis thaliana (Mouse-ear cress).